The primary structure comprises 144 residues: Methylglyoxal synthase (144 aa).

Positions 1 to 144 (MKIALIAHDE…KSGEEKETER (144 aa)) constitute an MGS-like domain. Substrate-binding positions include H8, K12, 34-37 (TGTT), and 54-55 (SG). Catalysis depends on D60, which acts as the Proton donor/acceptor. Residue H87 coordinates substrate.

Belongs to the methylglyoxal synthase family.

It catalyses the reaction dihydroxyacetone phosphate = methylglyoxal + phosphate. Catalyzes the formation of methylglyoxal from dihydroxyacetone phosphate. In Geobacillus thermodenitrificans (strain NG80-2), this protein is Methylglyoxal synthase.